A 124-amino-acid polypeptide reads, in one-letter code: Fluoride-specific ion channel FluC (124 aa).

A run of 4 helical transmembrane segments spans residues Met-1–Ala-21, Thr-38–Ile-58, Gly-69–Val-89, and Leu-99–Leu-119. Residues Gly-76 and Thr-79 each coordinate Na(+).

This sequence belongs to the fluoride channel Fluc/FEX (TC 1.A.43) family.

The protein localises to the cell inner membrane. The catalysed reaction is fluoride(in) = fluoride(out). Na(+) is not transported, but it plays an essential structural role and its presence is essential for fluoride channel function. In terms of biological role, fluoride-specific ion channel. Important for reducing fluoride concentration in the cell, thus reducing its toxicity. In Pseudomonas fluorescens (strain Pf0-1), this protein is Fluoride-specific ion channel FluC.